Consider the following 140-residue polypeptide: MMDIREIQAALPHRYPMLLVDRVLEVSDDHIVAIKNVTINEPFFNGHFPHYPVMPGVLIMEALAQTAGVLELSKEENKGKLVFYAGMDKVKFKKQVVPGDQLVMTATFIKRRGTIAVVEARAEVDGKLAASGTLTFACGQ.

Residue His-47 is part of the active site.

Belongs to the thioester dehydratase family. FabZ subfamily.

It is found in the cytoplasm. The catalysed reaction is a (3R)-hydroxyacyl-[ACP] = a (2E)-enoyl-[ACP] + H2O. Functionally, involved in unsaturated fatty acids biosynthesis. Catalyzes the dehydration of short chain beta-hydroxyacyl-ACPs and long chain saturated and unsaturated beta-hydroxyacyl-ACPs. This Streptococcus pyogenes serotype M49 (strain NZ131) protein is 3-hydroxyacyl-[acyl-carrier-protein] dehydratase FabZ.